The chain runs to 459 residues: Bifunctional protein GlmU (459 aa).

Positions 1 to 230 (MSNRFAVILA…FDETLGVNDR (230 aa)) are pyrophosphorylase. UDP-N-acetyl-alpha-D-glucosamine-binding positions include 9-12 (LAAG), lysine 23, glutamine 73, and 78-79 (GT). Aspartate 103 contributes to the Mg(2+) binding site. 4 residues coordinate UDP-N-acetyl-alpha-D-glucosamine: glycine 140, glutamate 155, asparagine 170, and asparagine 228. Asparagine 228 is a binding site for Mg(2+). The tract at residues 231-251 (VALSQAEIIMKNRINRKNMVN) is linker. The N-acetyltransferase stretch occupies residues 252–459 (GVTIIDPSNT…VDQLLNKKKS (208 aa)). Residues arginine 333 and lysine 351 each contribute to the UDP-N-acetyl-alpha-D-glucosamine site. Catalysis depends on histidine 363, which acts as the Proton acceptor. The UDP-N-acetyl-alpha-D-glucosamine site is built by tyrosine 366 and asparagine 377. Acetyl-CoA-binding positions include 386 to 387 (NY), alanine 423, and arginine 440.

In the N-terminal section; belongs to the N-acetylglucosamine-1-phosphate uridyltransferase family. It in the C-terminal section; belongs to the transferase hexapeptide repeat family. As to quaternary structure, homotrimer. Mg(2+) serves as cofactor.

The protein localises to the cytoplasm. It carries out the reaction alpha-D-glucosamine 1-phosphate + acetyl-CoA = N-acetyl-alpha-D-glucosamine 1-phosphate + CoA + H(+). The enzyme catalyses N-acetyl-alpha-D-glucosamine 1-phosphate + UTP + H(+) = UDP-N-acetyl-alpha-D-glucosamine + diphosphate. The protein operates within nucleotide-sugar biosynthesis; UDP-N-acetyl-alpha-D-glucosamine biosynthesis; N-acetyl-alpha-D-glucosamine 1-phosphate from alpha-D-glucosamine 6-phosphate (route II): step 2/2. It functions in the pathway nucleotide-sugar biosynthesis; UDP-N-acetyl-alpha-D-glucosamine biosynthesis; UDP-N-acetyl-alpha-D-glucosamine from N-acetyl-alpha-D-glucosamine 1-phosphate: step 1/1. Its pathway is bacterial outer membrane biogenesis; LPS lipid A biosynthesis. Functionally, catalyzes the last two sequential reactions in the de novo biosynthetic pathway for UDP-N-acetylglucosamine (UDP-GlcNAc). The C-terminal domain catalyzes the transfer of acetyl group from acetyl coenzyme A to glucosamine-1-phosphate (GlcN-1-P) to produce N-acetylglucosamine-1-phosphate (GlcNAc-1-P), which is converted into UDP-GlcNAc by the transfer of uridine 5-monophosphate (from uridine 5-triphosphate), a reaction catalyzed by the N-terminal domain. The protein is Bifunctional protein GlmU of Bacillus anthracis (strain A0248).